Reading from the N-terminus, the 163-residue chain is MASIAQAAKSLLLKEFASAFALSMRQFFAPKATLNYPHEKGPVSPRFRGEHALRRYPNGEERCIACKLCEAICPAQAITIEAGPRRNDGTRRTVRYDIDMVKCIYCGFCQEACPVDAIVEGPNFEFATETREELYYDKDKLLANGDRWEREIARNIAMDAPYR.

2 4Fe-4S ferredoxin-type domains span residues 53–83 (LRRYPNGEERCIACKLCEAICPAQAITIEAG) and 94–123 (VRYDIDMVKCIYCGFCQEACPVDAIVEGPN). Cysteine 63, cysteine 66, cysteine 69, cysteine 73, cysteine 103, cysteine 106, cysteine 109, and cysteine 113 together coordinate [4Fe-4S] cluster.

Belongs to the complex I 23 kDa subunit family. In terms of assembly, NDH-1 is composed of 14 different subunits. Subunits NuoA, H, J, K, L, M, N constitute the membrane sector of the complex. It depends on [4Fe-4S] cluster as a cofactor.

Its subcellular location is the cell inner membrane. The enzyme catalyses a quinone + NADH + 5 H(+)(in) = a quinol + NAD(+) + 4 H(+)(out). NDH-1 shuttles electrons from NADH, via FMN and iron-sulfur (Fe-S) centers, to quinones in the respiratory chain. The immediate electron acceptor for the enzyme in this species is believed to be ubiquinone. Couples the redox reaction to proton translocation (for every two electrons transferred, four hydrogen ions are translocated across the cytoplasmic membrane), and thus conserves the redox energy in a proton gradient. The polypeptide is NADH-quinone oxidoreductase subunit I (Brucella abortus (strain S19)).